A 476-amino-acid chain; its full sequence is Glutamate--tRNA ligase (476 aa).

Positions 9 to 19 match the 'HIGH' region motif; sequence PSPTGKLHIGT. Over residues 109 to 129 the composition is skewed to basic and acidic residues; it reads REEQKSRNKPPRYDNRHRSLS. Residues 109-133 are disordered; sequence REEQKSRNKPPRYDNRHRSLSTEEE. The 'KMSKS' region signature appears at 248 to 252; sequence KLSKR. An ATP-binding site is contributed by Lys-251.

It belongs to the class-I aminoacyl-tRNA synthetase family. Glutamate--tRNA ligase type 1 subfamily. In terms of assembly, monomer.

The protein resides in the cytoplasm. The catalysed reaction is tRNA(Glu) + L-glutamate + ATP = L-glutamyl-tRNA(Glu) + AMP + diphosphate. Its function is as follows. Catalyzes the attachment of glutamate to tRNA(Glu) in a two-step reaction: glutamate is first activated by ATP to form Glu-AMP and then transferred to the acceptor end of tRNA(Glu). The protein is Glutamate--tRNA ligase of Prochlorococcus marinus (strain MIT 9211).